We begin with the raw amino-acid sequence, 118 residues long: Protein YLR162W (118 aa).

Over residues 1 to 20 the composition is skewed to polar residues; that stretch reads MQHTLTRTASLPERSSSAHS. Residues 1–26 are disordered; the sequence is MQHTLTRTASLPERSSSAHSAATALP. A helical membrane pass occupies residues 38–58; that stretch reads LVPLLCIFWFVFVSMSPLPPA.

Its subcellular location is the membrane. In terms of biological role, overexpression confers resistance to the antimicrobial peptide MiAMP1. The chain is Protein YLR162W from Saccharomyces cerevisiae (strain ATCC 204508 / S288c) (Baker's yeast).